Reading from the N-terminus, the 466-residue chain is Ribulose bisphosphate carboxylase large chain (466 aa).

Lysine 5 is modified (N6,N6,N6-trimethyllysine). Residues asparagine 114 and threonine 164 each contribute to the substrate site. Lysine 166 serves as the catalytic Proton acceptor. Lysine 168 lines the substrate pocket. The Mg(2+) site is built by lysine 192, aspartate 194, and glutamate 195. Lysine 192 is modified (N6-carboxylysine). Residue histidine 285 is the Proton acceptor of the active site. 3 residues coordinate substrate: arginine 286, histidine 318, and serine 370.

Belongs to the RuBisCO large chain family. Type I subfamily. Heterohexadecamer of 8 large chains and 8 small chains; disulfide-linked. The disulfide link is formed within the large subunit homodimers. Requires Mg(2+) as cofactor. Post-translationally, the disulfide bond which can form in the large chain dimeric partners within the hexadecamer appears to be associated with oxidative stress and protein turnover.

The protein localises to the plastid. Its subcellular location is the chloroplast. The enzyme catalyses 2 (2R)-3-phosphoglycerate + 2 H(+) = D-ribulose 1,5-bisphosphate + CO2 + H2O. It carries out the reaction D-ribulose 1,5-bisphosphate + O2 = 2-phosphoglycolate + (2R)-3-phosphoglycerate + 2 H(+). In terms of biological role, ruBisCO catalyzes two reactions: the carboxylation of D-ribulose 1,5-bisphosphate, the primary event in carbon dioxide fixation, as well as the oxidative fragmentation of the pentose substrate in the photorespiration process. Both reactions occur simultaneously and in competition at the same active site. In Drosera binata (Fork-leaved sundew), this protein is Ribulose bisphosphate carboxylase large chain.